The primary structure comprises 62 residues: Photosystem II reaction center protein Z (62 aa).

2 helical membrane-spanning segments follow: residues 8-28 and 41-61; these read ALFA…VILA and FSGA…NSFI.

The protein belongs to the PsbZ family. PSII is composed of 1 copy each of membrane proteins PsbA, PsbB, PsbC, PsbD, PsbE, PsbF, PsbH, PsbI, PsbJ, PsbK, PsbL, PsbM, PsbT, PsbY, PsbZ, Psb30/Ycf12, at least 3 peripheral proteins of the oxygen-evolving complex and a large number of cofactors. It forms dimeric complexes.

It localises to the plastid. Its subcellular location is the chloroplast thylakoid membrane. May control the interaction of photosystem II (PSII) cores with the light-harvesting antenna, regulates electron flow through the 2 photosystem reaction centers. PSII is a light-driven water plastoquinone oxidoreductase, using light energy to abstract electrons from H(2)O, generating a proton gradient subsequently used for ATP formation. This is Photosystem II reaction center protein Z from Chara vulgaris (Common stonewort).